Consider the following 168-residue polypeptide: MSNENLSPNSSNPDLTKLNNGESGTIDTSKFSPNEMKLYKMYGKLPSKKDIFKHTMQKRKYFDSGDYALQKAGIQNNDPINYGKNNLPLTNPSKLREDIIKRRISTCPSTASTAGVVDNATLIQKEGSISSGPPSSNNGTIGGGSTSSTPVGNHSSSSSSLYTESPIR.

The segment covering 1 to 13 has biased composition (low complexity); the sequence is MSNENLSPNSSNP. A disordered region spans residues 1-31; that stretch reads MSNENLSPNSSNPDLTKLNNGESGTIDTSKF. Polar residues predominate over residues 17–31; that stretch reads KLNNGESGTIDTSKF. Ser-32 and Ser-64 each carry phosphoserine. The segment at 125-168 is disordered; the sequence is KEGSISSGPPSSNNGTIGGGSTSSTPVGNHSSSSSSLYTESPIR. Composition is skewed to low complexity over residues 127–139 and 146–168; these read GSIS…SNNG and TSST…SPIR.

The protein belongs to the endosulfine family. As to quaternary structure, interacts with RIM15, DHH1, PBP1, PBP4 and LSM12. Phosphorylated at Ser-64 by RIM15.

Required for TORC1 to properly control gene expression and chronological life span. Plays an essential role in initiation of the G0 program by preventing the degradation of specific nutrient-regulated mRNAs via the 5'-3' mRNA decay pathway. The chain is mRNA stability protein IGO1 (IGO1) from Saccharomyces cerevisiae (strain ATCC 204508 / S288c) (Baker's yeast).